The sequence spans 102 residues: Large ribosomal subunit protein bL21 (102 aa).

It belongs to the bacterial ribosomal protein bL21 family. As to quaternary structure, part of the 50S ribosomal subunit. Contacts protein L20.

In terms of biological role, this protein binds to 23S rRNA in the presence of protein L20. In Leptospira biflexa serovar Patoc (strain Patoc 1 / Ames), this protein is Large ribosomal subunit protein bL21.